The sequence spans 188 residues: Nicotinamide-nucleotide adenylyltransferase (188 aa).

A disordered region spans residues 166-188 (SDSLERYAATGESLPESLDDLDD).

It belongs to the archaeal NMN adenylyltransferase family.

It localises to the cytoplasm. The enzyme catalyses beta-nicotinamide D-ribonucleotide + ATP + H(+) = diphosphate + NAD(+). It functions in the pathway cofactor biosynthesis; NAD(+) biosynthesis; NAD(+) from nicotinamide D-ribonucleotide: step 1/1. The chain is Nicotinamide-nucleotide adenylyltransferase from Haloarcula marismortui (strain ATCC 43049 / DSM 3752 / JCM 8966 / VKM B-1809) (Halobacterium marismortui).